The following is a 571-amino-acid chain: EPTPLHDTPPTVFFEVTKPIEVPKTKPCSQLILQHDFAYTYGQAPVFANYTPPSDCPSQTFSTIVLEWKATCRRRQFDRIFGVWLGGVEILRSCTAEPRPNGIVWTVEKDITRYYSLLKSNQTLAVYLGNLIDKTYTGIYHVNISLHFYPAKEKLNSFQQKLDNLASGYHSWADLILPISRNLPLNDGLWFEVQNSNDTELKEFKIPQNAYRAVLEVYVSFHENDEFWYSNLPNEYIAANNLSGTPGNGPFREVVVSLDGEVVGAVWPFTVIFTGGINPLLWRPITAIGSFDLPTYDIEITPFLGKILDGKSHKFGFNVTNALNVWYVDANLHLWLDKQSTKTEGKLSKHSSLPLVVSLVSDFKGLNGTFLTRTSRSVSSTGWVKSSYGNITTRSIQDFYYSNSMVLGKDGNMQIVNQKIIFNDSVYINLPSSYVHSLTSHKTFPLYLYTDFLGQGNGTYLLITNVDLGFIEKKSGLGFSNSSLRNLRSAEGNMVVKNNLVVSGLESTQQIYRYDGGKFCYFRNISSSNYTILYDKVGSKCNKKSLSNLDFVLSRLWPFGARMNFAGLRFT.

N121, N143, N197, N241, N318, N367, N390, N423, N457, N481, N524, and N529 each carry an N-linked (GlcNAc...) asparagine glycan.

As to quaternary structure, heterodimer of a large and a small chain. Is highly glycosylated and is largly resistant against self-deglycosylation.

It catalyses the reaction Hydrolysis of an N(4)-(acetyl-beta-D-glucosaminyl)asparagine residue in which the glucosamine residue may be further glycosylated, to yield a (substituted) N-acetyl-beta-D-glucosaminylamine and a peptide containing an aspartate residue.. The chain is Peptide-N4-(N-acetyl-beta-glucosaminyl)asparagine amidase A from Prunus dulcis (Almond).